A 336-amino-acid chain; its full sequence is Probable deoxyhypusine synthase (336 aa).

Residue lysine 308 is the Nucleophile of the active site.

Belongs to the deoxyhypusine synthase family. It depends on NAD(+) as a cofactor.

The catalysed reaction is [eIF5A protein]-L-lysine + spermidine = [eIF5A protein]-deoxyhypusine + propane-1,3-diamine. It functions in the pathway protein modification; eIF5A hypusination. Its function is as follows. Catalyzes the NAD-dependent oxidative cleavage of spermidine and the subsequent transfer of the butylamine moiety of spermidine to the epsilon-amino group of a specific lysine residue of the eIF-5A precursor protein to form the intermediate deoxyhypusine residue. The chain is Probable deoxyhypusine synthase from Pyrococcus furiosus (strain ATCC 43587 / DSM 3638 / JCM 8422 / Vc1).